Here is a 169-residue protein sequence, read N- to C-terminus: uncharacterized protein (169 aa).

Residue S165 is modified to Phosphoserine.

This is an uncharacterized protein from Drosophila melanogaster (Fruit fly).